The primary structure comprises 123 residues: uncharacterized protein (123 aa).

A helical membrane pass occupies residues 5–25 (GTLVILFAIILILCIMLLFYY).

It belongs to the asfivirus CP123L family.

It is found in the host membrane. Its subcellular location is the virion. This is an uncharacterized protein from Ornithodoros (relapsing fever ticks).